A 68-amino-acid chain; its full sequence is Conotoxin ArMMSK-01 (68 aa).

The N-terminal stretch at 1–20 is a signal peptide; it reads MMSKLGVLLTICMLLFPLTA. Residues 21–51 constitute a propeptide that is removed on maturation; sequence LPLDGDQPADRPAERMQDDFISEQHPLFNPI. Disulfide bonds link Cys54–Cys67, Cys55–Cys63, and Cys59–Cys66. A 4-hydroxyproline modification is found at Pro65.

This sequence belongs to the conotoxin M superfamily. Expressed by the venom duct.

It is found in the secreted. This chain is Conotoxin ArMMSK-01, found in Conus arenatus (Sand-dusted cone).